A 366-amino-acid chain; its full sequence is Probable trehalose-phosphate phosphatase 3 (366 aa).

This sequence belongs to the trehalose phosphatase family. The cofactor is a divalent metal cation.

It carries out the reaction alpha,alpha-trehalose 6-phosphate + H2O = alpha,alpha-trehalose + phosphate. It functions in the pathway glycan biosynthesis; trehalose biosynthesis. In terms of biological role, removes the phosphate from trehalose 6-phosphate to produce free trehalose. Trehalose accumulation in plant may improve abiotic stress tolerance. In Oryza sativa subsp. japonica (Rice), this protein is Probable trehalose-phosphate phosphatase 3 (TPP3).